The chain runs to 510 residues: Inositol-3-phosphate synthase (510 aa).

Positions 70, 71, 72, 73, 143, 180, 190, 193, 230, 231, 232, 233, 281, 282, 306, 309, 340, 341, 342, 355, 393, 394, 422, and 423 each coordinate NAD(+).

The protein belongs to the myo-inositol 1-phosphate synthase family. Requires NAD(+) as cofactor.

It localises to the cytoplasm. Its subcellular location is the cytosol. The protein localises to the nucleus. It carries out the reaction D-glucose 6-phosphate = 1D-myo-inositol 3-phosphate. The protein operates within polyol metabolism; myo-inositol biosynthesis; myo-inositol from D-glucose 6-phosphate: step 1/2. In terms of biological role, key enzyme in myo-inositol biosynthesis pathway that catalyzes the conversion of glucose 6-phosphate to 1-myo-inositol 1-phosphate in a NAD-dependent manner. The polypeptide is Inositol-3-phosphate synthase (Hordeum vulgare (Barley)).